Here is a 286-residue protein sequence, read N- to C-terminus: 2-oxoglutarate synthase subunit KorB (286 aa).

As to quaternary structure, heterotetramer of the KorA, KorB, KorC and KorD subunits.

It carries out the reaction 2 oxidized [2Fe-2S]-[ferredoxin] + 2-oxoglutarate + CoA = succinyl-CoA + 2 reduced [2Fe-2S]-[ferredoxin] + CO2 + H(+). This is 2-oxoglutarate synthase subunit KorB (korB) from Methanothermobacter thermautotrophicus (strain ATCC 29096 / DSM 1053 / JCM 10044 / NBRC 100330 / Delta H) (Methanobacterium thermoautotrophicum).